The following is a 475-amino-acid chain: Ribulose bisphosphate carboxylase large chain (475 aa).

A propeptide spanning residues 1–2 (MS) is cleaved from the precursor. P3 carries the N-acetylproline modification. Residue K14 is modified to N6,N6,N6-trimethyllysine. Substrate-binding residues include N123 and T173. K175 functions as the Proton acceptor in the catalytic mechanism. K177 is a substrate binding site. Positions 201, 203, and 204 each coordinate Mg(2+). The residue at position 201 (K201) is an N6-carboxylysine. H294 acts as the Proton acceptor in catalysis. Substrate contacts are provided by R295, H327, and S379.

The protein belongs to the RuBisCO large chain family. Type I subfamily. In terms of assembly, heterohexadecamer of 8 large chains and 8 small chains; disulfide-linked. The disulfide link is formed within the large subunit homodimers. Mg(2+) serves as cofactor. In terms of processing, the disulfide bond which can form in the large chain dimeric partners within the hexadecamer appears to be associated with oxidative stress and protein turnover.

The protein resides in the plastid. Its subcellular location is the chloroplast. The enzyme catalyses 2 (2R)-3-phosphoglycerate + 2 H(+) = D-ribulose 1,5-bisphosphate + CO2 + H2O. It carries out the reaction D-ribulose 1,5-bisphosphate + O2 = 2-phosphoglycolate + (2R)-3-phosphoglycerate + 2 H(+). Its function is as follows. RuBisCO catalyzes two reactions: the carboxylation of D-ribulose 1,5-bisphosphate, the primary event in carbon dioxide fixation, as well as the oxidative fragmentation of the pentose substrate in the photorespiration process. Both reactions occur simultaneously and in competition at the same active site. This chain is Ribulose bisphosphate carboxylase large chain, found in Eucalyptus globulus subsp. globulus (Tasmanian blue gum).